The chain runs to 395 residues: Probable FMNH2-dependent monooxygenase SfnC (395 aa).

Its function is as follows. Involved in the dimethyl sulfide degradation pathway. The protein is Probable FMNH2-dependent monooxygenase SfnC of Pseudomonas putida (Arthrobacter siderocapsulatus).